We begin with the raw amino-acid sequence, 635 residues long: Moesin/ezrin/radixin homolog 2 (635 aa).

The FERM domain occupies 12 to 305; it reads LSVRVSTFDS…GNHDLYMRRR (294 aa).

In terms of assembly, interacts with Moe and arm at the adherens junction. Forms a complex with Kibra and Ex. Interacts (via FERM domain) with Sav (via FBM motif). Interacts with Schip1. In terms of tissue distribution, expressed predominantly in the germline. Expressed in the developing oocyte from stage 6 to the end of oogenesis and in the apical ends of follical cells from stage 10. Ubiquitous expression throughout embryogenesis with enhanced expression in mesoderm of early embryos and midgut of late embryos. In embryonic CNS, expression is seen in neuropil and developing brain and is enhanced in neuronal cell bodies. In embryonic PNS, expression is seen within the cell body. In third instar larvae, expression is uniform in the eye imaginal disk and is enhanced at the morphogenetic furrow. In pupal eyes, expression is seen in the cytoplasm of secondary and tertiary pigment cells, bristle precursor cells and rhabdomeres.

It localises to the cell junction. It is found in the adherens junction. The protein resides in the cell membrane. The protein localises to the cytoplasm. Its subcellular location is the cytoskeleton. It localises to the apical cell membrane. It is found in the cell projection. The protein resides in the rhabdomere. Functionally, regulator of the Hippo/SWH (Sav/Wts/Hpo) signaling pathway, a signaling pathway that plays a pivotal role in organ size control and tumor suppression by restricting proliferation and promoting apoptosis. The core of this pathway is composed of a kinase cascade wherein Hippo (Hpo), in complex with its regulatory protein Salvador (Sav), phosphorylates and activates Warts (Wts) in complex with its regulatory protein Mats, which in turn phosphorylates and inactivates the Yorkie (Yki) oncoprotein. Mer acts synergistically along with Ex and Kibra to regulate the Hippo signaling pathway. This chain is Moesin/ezrin/radixin homolog 2 (Mer), found in Drosophila melanogaster (Fruit fly).